A 200-amino-acid polypeptide reads, in one-letter code: NADH-quinone oxidoreductase subunit C (200 aa).

This sequence belongs to the complex I 30 kDa subunit family. NDH-1 is composed of 14 different subunits. Subunits NuoB, C, D, E, F, and G constitute the peripheral sector of the complex.

The protein resides in the cell inner membrane. The catalysed reaction is a quinone + NADH + 5 H(+)(in) = a quinol + NAD(+) + 4 H(+)(out). Its function is as follows. NDH-1 shuttles electrons from NADH, via FMN and iron-sulfur (Fe-S) centers, to quinones in the respiratory chain. The immediate electron acceptor for the enzyme in this species is believed to be ubiquinone. Couples the redox reaction to proton translocation (for every two electrons transferred, four hydrogen ions are translocated across the cytoplasmic membrane), and thus conserves the redox energy in a proton gradient. The sequence is that of NADH-quinone oxidoreductase subunit C from Rhizobium leguminosarum bv. trifolii (strain WSM2304).